Consider the following 409-residue polypeptide: S-adenosylmethionine synthase (409 aa).

An ATP-binding site is contributed by His15. Asp17 lines the Mg(2+) pocket. Glu43 is a binding site for K(+). Positions 56 and 100 each coordinate L-methionine. The flexible loop stretch occupies residues 100–110; it reads QSSDIAQGVNE. Residues 171–173, 248–249, Asp257, 263–264, Ala280, and Lys284 each bind ATP; these read DGK, KF, and RK. Residue Asp257 coordinates L-methionine. Lys288 is an L-methionine binding site.

Belongs to the AdoMet synthase family. In terms of assembly, homotetramer; dimer of dimers. Mg(2+) is required as a cofactor. Requires K(+) as cofactor.

The protein localises to the cytoplasm. The catalysed reaction is L-methionine + ATP + H2O = S-adenosyl-L-methionine + phosphate + diphosphate. Its pathway is amino-acid biosynthesis; S-adenosyl-L-methionine biosynthesis; S-adenosyl-L-methionine from L-methionine: step 1/1. Functionally, catalyzes the formation of S-adenosylmethionine (AdoMet) from methionine and ATP. The overall synthetic reaction is composed of two sequential steps, AdoMet formation and the subsequent tripolyphosphate hydrolysis which occurs prior to release of AdoMet from the enzyme. The chain is S-adenosylmethionine synthase from Prochlorococcus marinus (strain NATL1A).